The following is a 362-amino-acid chain: P2Y purinoceptor 1 (362 aa).

Over 1 to 40 (MTEALISAALNGTQPELLAGGWAAGNASTKCSLTKTGFQF) the chain is Extracellular. N11 and N26 each carry an N-linked (GlcNAc...) asparagine glycan. 2 disulfides stabilise this stretch: C31/C285 and C113/C191. An ADP-binding site is contributed by K35. A helical membrane pass occupies residues 41-63 (YYLPTVYILVFITGFLGNSVAIW). Over 64–76 (MFVFHMRPWSGIS) the chain is Cytoplasmic. Residues 77–98 (VYMFNLALADFLYVLTLPALIF) traverse the membrane as a helical segment. The Extracellular portion of the chain corresponds to 99–114 (YYFNKTDWIFGDVMCK). N102 is a glycosylation site (N-linked (GlcNAc...) asparagine). Residues 115 to 136 (LQRFIFHVNLYGSILFLTCISV) traverse the membrane as a helical segment. Residues 137 to 155 (HRYTGVVHPLKSLGRLKKK) are Cytoplasmic-facing. The chain crosses the membrane as a helical span at residues 156–177 (NAVYVSSLVWALVVAVIAPILF). The Extracellular segment spans residues 178–203 (YSGTGVRRNKTITCYDTTADEYLRSY). The N-linked (GlcNAc...) asparagine glycan is linked to N186. 192-194 (YDT) is a binding site for ADP. Residues 204-226 (FVYSMCTTVFMFCIPFIVILGCY) traverse the membrane as a helical segment. Residues 227–249 (GLIVKALIYKDLDNSPLRRKSIY) lie on the Cytoplasmic side of the membrane. Residues 250-273 (LVIIVLTVFAVSYLPFHVMKTLNL) form a helical membrane-spanning segment. ADP-binding positions include 272–276 (NLRAR), 292–295 (YATY), and R299. The Extracellular portion of the chain corresponds to 274 to 292 (RARLDFQTPQMCAFNDKVY). The chain crosses the membrane as a helical span at residues 293-314 (ATYQVTRGLASLNSCVDPILYF). The Cytoplasmic portion of the chain corresponds to 315–362 (LAGDTFRRRLSRATRKSSRRSEPNVQSKSEEMTLNILTEYKQNGDTSL).

The protein belongs to the G-protein coupled receptor 1 family. Mainly found in blood, brain, and lung. To a lesser extent in stomach, gut and skeletal muscle.

The protein resides in the cell membrane. In terms of biological role, receptor for extracellular adenine nucleotides such as ADP. In platelets, binding to ADP leads to mobilization of intracellular calcium ions via activation of phospholipase C, a change in platelet shape, and ultimately platelet aggregation. In Meleagris gallopavo (Wild turkey), this protein is P2Y purinoceptor 1 (P2RY1).